Reading from the N-terminus, the 106-residue chain is 3-phenylpropionate/cinnamic acid dioxygenase ferredoxin subunit (106 aa).

The Rieske domain occupies 4–99 (IYACPVADVP…VHVEGSDIFI (96 aa)). Residues C42, H44, C62, and H65 each contribute to the [2Fe-2S] cluster site.

The protein belongs to the bacterial ring-hydroxylating dioxygenase ferredoxin component family. In terms of assembly, this dioxygenase system consists of four proteins: the two subunits of the hydroxylase component (HcaE and HcaF), a ferredoxin (HcaC) and a ferredoxin reductase (HcaD). Requires [2Fe-2S] cluster as cofactor.

It functions in the pathway aromatic compound metabolism; 3-phenylpropanoate degradation. Functionally, part of the multicomponent 3-phenylpropionate dioxygenase, that converts 3-phenylpropionic acid (PP) and cinnamic acid (CI) into 3-phenylpropionate-dihydrodiol (PP-dihydrodiol) and cinnamic acid-dihydrodiol (CI-dihydrodiol), respectively. This protein seems to be a 2Fe-2S ferredoxin. The chain is 3-phenylpropionate/cinnamic acid dioxygenase ferredoxin subunit from Shigella boydii serotype 4 (strain Sb227).